A 138-amino-acid chain; its full sequence is Prefoldin subunit alpha (138 aa).

It belongs to the prefoldin subunit alpha family. In terms of assembly, heterohexamer of two alpha and four beta subunits.

It is found in the cytoplasm. Its function is as follows. Molecular chaperone capable of stabilizing a range of proteins. Seems to fulfill an ATP-independent, HSP70-like function in archaeal de novo protein folding. This chain is Prefoldin subunit alpha, found in Methanosphaera stadtmanae (strain ATCC 43021 / DSM 3091 / JCM 11832 / MCB-3).